A 77-amino-acid chain; its full sequence is Small ribosomal subunit protein bS21 (77 aa).

Over residues 38–52 (KPSEKRAREKAEAVR) the composition is skewed to basic and acidic residues. The disordered stretch occupies residues 38-77 (KPSEKRAREKAEAVRRTRKLARKRAQREGLISNGRGSPLK). Positions 53 to 62 (RTRKLARKRA) are enriched in basic residues.

This sequence belongs to the bacterial ribosomal protein bS21 family.

The sequence is that of Small ribosomal subunit protein bS21 from Bartonella henselae (strain ATCC 49882 / DSM 28221 / CCUG 30454 / Houston 1) (Rochalimaea henselae).